The chain runs to 201 residues: IMP cyclohydrolase (201 aa).

It belongs to the archaeal IMP cyclohydrolase family.

It catalyses the reaction IMP + H2O = 5-formamido-1-(5-phospho-D-ribosyl)imidazole-4-carboxamide. It functions in the pathway purine metabolism; IMP biosynthesis via de novo pathway; IMP from 5-formamido-1-(5-phospho-D-ribosyl)imidazole-4-carboxamide: step 1/1. In terms of biological role, catalyzes the cyclization of 5-formylamidoimidazole-4-carboxamide ribonucleotide to IMP. In Methanococcus maripaludis (strain C5 / ATCC BAA-1333), this protein is IMP cyclohydrolase.